Here is a 490-residue protein sequence, read N- to C-terminus: Cytochrome P450 2C13, male-specific (490 aa).

Residue C435 coordinates heme.

The protein belongs to the cytochrome P450 family. Heme is required as a cofactor. In terms of tissue distribution, liver, and to a lesser extent in prostate, kidney, heart and brain.

It is found in the endoplasmic reticulum membrane. The protein localises to the microsome membrane. The enzyme catalyses an organic molecule + reduced [NADPH--hemoprotein reductase] + O2 = an alcohol + oxidized [NADPH--hemoprotein reductase] + H2O + H(+). Functionally, cytochromes P450 are a group of heme-thiolate monooxygenases. In liver microsomes, this enzyme is involved in an NADPH-dependent electron transport pathway. It oxidizes a variety of structurally unrelated compounds, including steroids, fatty acids, and xenobiotics. The polypeptide is Cytochrome P450 2C13, male-specific (Cyp2c13) (Rattus norvegicus (Rat)).